We begin with the raw amino-acid sequence, 256 residues long: 5-keto-4-deoxy-D-glucarate aldolase (256 aa).

Catalysis depends on His-50, which acts as the Proton acceptor. Gln-151 contributes to the substrate binding site. Residue Glu-153 coordinates Mg(2+). The substrate site is built by Ser-178 and Asp-179. Mg(2+) is bound at residue Asp-179.

The protein belongs to the HpcH/HpaI aldolase family. KDGluc aldolase subfamily. In terms of assembly, homohexamer; trimer of dimers. Mg(2+) is required as a cofactor.

It carries out the reaction 5-dehydro-4-deoxy-D-glucarate = 2-hydroxy-3-oxopropanoate + pyruvate. It catalyses the reaction 2-dehydro-3-deoxy-D-glucarate = 2-hydroxy-3-oxopropanoate + pyruvate. Its pathway is carbohydrate acid metabolism; galactarate degradation; D-glycerate from galactarate: step 2/3. Its function is as follows. Catalyzes the reversible retro-aldol cleavage of both 5-keto-4-deoxy-D-glucarate and 2-keto-3-deoxy-D-glucarate to pyruvate and tartronic semialdehyde. The chain is 5-keto-4-deoxy-D-glucarate aldolase from Salmonella paratyphi C (strain RKS4594).